An 82-amino-acid chain; its full sequence is Acyl carrier protein (82 aa).

The region spanning 4 to 79 (PEMEERLRKI…DALNYLETHQ (76 aa)) is the Carrier domain. Ser-39 carries the post-translational modification O-(pantetheine 4'-phosphoryl)serine.

Belongs to the acyl carrier protein (ACP) family. In terms of processing, 4'-phosphopantetheine is transferred from CoA to a specific serine of apo-ACP by AcpS. This modification is essential for activity because fatty acids are bound in thioester linkage to the sulfhydryl of the prosthetic group.

It localises to the cytoplasm. It participates in lipid metabolism; fatty acid biosynthesis. Its function is as follows. Carrier of the growing fatty acid chain in fatty acid biosynthesis. In Chloroflexus aurantiacus (strain ATCC 29366 / DSM 635 / J-10-fl), this protein is Acyl carrier protein.